The chain runs to 242 residues: 2-amino-5-formylamino-6-ribosylaminopyrimidin-4(3H)-one 5'-monophosphate deformylase (242 aa).

Positions 46, 48, 57, and 125 each coordinate Fe cation.

The protein belongs to the creatininase superfamily. FAPy deformylase family. Homodimer. The cofactor is Fe(2+). Requires Zn(2+) as cofactor.

The catalysed reaction is 2-amino-5-formylamino-6-(5-phospho-D-ribosylamino)pyrimidin-4(3H)-one + H2O = 2,5-diamino-6-(1-D-ribosylamino)pyrimidin-4(3H)-one 5'-phosphate + formate + H(+). Its pathway is cofactor biosynthesis; coenzyme F420 biosynthesis. The protein operates within cofactor biosynthesis; riboflavin biosynthesis. Catalyzes the hydrolysis of the formamide of 2-amino-5-formylamino-6-ribosylamino-4(3H)-pyrimidinone 5'-monophosphate (FAPy) to form 2,5-diamino-6-ribosylamino-4(3H)-pyrimidinone 5'-phosphate (APy). The protein is 2-amino-5-formylamino-6-ribosylaminopyrimidin-4(3H)-one 5'-monophosphate deformylase of Methanococcus aeolicus (strain ATCC BAA-1280 / DSM 17508 / OCM 812 / Nankai-3).